The following is a 138-amino-acid chain: Acidic phospholipase A2 DsM-a2/DsM-a2' (138 aa).

Positions 1 to 16 are cleaved as a signal peptide; that stretch reads MRTLWIVAVCLIGVEG. Intrachain disulfides connect C42/C131, C44/C60, C59/C111, C65/C138, C66/C104, C73/C97, and C91/C102. Ca(2+) is bound by residues Y43, G45, and G47. The active site involves H63. Residue D64 coordinates Ca(2+). D105 is an active-site residue.

This sequence belongs to the phospholipase A2 family. Group II subfamily. D49 sub-subfamily. Requires Ca(2+) as cofactor. In terms of tissue distribution, expressed by the venom gland.

The protein localises to the secreted. The enzyme catalyses a 1,2-diacyl-sn-glycero-3-phosphocholine + H2O = a 1-acyl-sn-glycero-3-phosphocholine + a fatty acid + H(+). In terms of biological role, exhibits high hydrolytic activities and shows strong preference for the anionic micelles (dPPC with deoxycholate) to the zwitterionic micelles (dPPC with Triton X-100). PLA2 catalyzes the calcium-dependent hydrolysis of the 2-acyl groups in 3-sn-phosphoglycerides. The polypeptide is Acidic phospholipase A2 DsM-a2/DsM-a2' (Daboia siamensis (Eastern Russel's viper)).